The primary structure comprises 327 residues: Ribosomal RNA large subunit methyltransferase F (327 aa).

The tract at residues 1–31 (MTHPVTPKNTTRPTPANKPAASTLHPRNPHQ) is disordered.

This sequence belongs to the methyltransferase superfamily. METTL16/RlmF family.

The protein localises to the cytoplasm. It carries out the reaction adenosine(1618) in 23S rRNA + S-adenosyl-L-methionine = N(6)-methyladenosine(1618) in 23S rRNA + S-adenosyl-L-homocysteine + H(+). Functionally, specifically methylates the adenine in position 1618 of 23S rRNA. The chain is Ribosomal RNA large subunit methyltransferase F from Psychrobacter sp. (strain PRwf-1).